The chain runs to 503 residues: Cytochrome P450 11B1, mitochondrial (503 aa).

A mitochondrion-targeting transit peptide spans 1 to 24 (MALRAKAEVCMAAPWLSLQRARAL). Cys450 is a binding site for heme.

This sequence belongs to the cytochrome P450 family. Heme serves as cofactor.

Its subcellular location is the mitochondrion inner membrane. It catalyses the reaction a steroid + 2 reduced [adrenodoxin] + O2 + 2 H(+) = an 11beta-hydroxysteroid + 2 oxidized [adrenodoxin] + H2O. The catalysed reaction is 11-deoxycortisol + 2 reduced [adrenodoxin] + O2 + 2 H(+) = cortisol + 2 oxidized [adrenodoxin] + H2O. The enzyme catalyses 21-hydroxyprogesterone + 2 reduced [adrenodoxin] + O2 + 2 H(+) = corticosterone + 2 oxidized [adrenodoxin] + H2O. It carries out the reaction 21-hydroxyprogesterone + 2 reduced [adrenodoxin] + O2 + 2 H(+) = 18-hydroxy-11-deoxycorticosterone + 2 oxidized [adrenodoxin] + H2O. It catalyses the reaction 21-hydroxyprogesterone + 2 reduced [adrenodoxin] + O2 + 2 H(+) = 19-hydroxy-11-deoxycorticosterone + 2 oxidized [adrenodoxin] + H2O. The catalysed reaction is cortisol + 2 reduced [adrenodoxin] + O2 + 2 H(+) = 18-hydroxycortisol + 2 oxidized [adrenodoxin] + H2O. The enzyme catalyses 11-deoxycortisol + 2 reduced [adrenodoxin] + O2 + 2 H(+) = 18-hydroxy-11-deoxycortisol + 2 oxidized [adrenodoxin] + H2O. It functions in the pathway steroid biosynthesis; glucocorticoid biosynthesis. It participates in steroid hormone biosynthesis. Its function is as follows. A cytochrome P450 monooxygenase involved in the biosynthesis of adrenal corticoids. Catalyzes a variety of reactions that are essential for many species, including detoxification, defense, and the formation of endogenous chemicals like steroid hormones. Steroid 11beta, 18- and 19-hydroxylase with preferred regioselectivity at 11beta, then 18, and lastly 19. Catalyzes the hydroxylation of 11-deoxycortisol and 11-deoxycorticosterone (21-hydroxyprogesterone) at 11beta position, yielding cortisol or corticosterone, respectively, but cannot produce aldosterone. Mechanistically, uses molecular oxygen inserting one oxygen atom into a substrate for hydroxylation and reducing the second into a water molecule. Two electrons are provided by NADPH via a two-protein mitochondrial transfer system comprising flavoprotein FDXR (adrenodoxin/ferredoxin reductase) and nonheme iron-sulfur protein FDX1 or FDX2 (adrenodoxin/ferredoxin). Due to its lack of 18-oxidation activity, it is incapable of generating aldosterone. Could also be involved in the androgen metabolic pathway. The protein is Cytochrome P450 11B1, mitochondrial (CYP11B1) of Papio hamadryas ursinus (Chacma baboon).